The following is a 602-amino-acid chain: Transcription termination factor Rho (602 aa).

Disordered stretches follow at residues 1–35 (MTDT…EPAG) and 76–216 (ANGA…AEAE). Basic and acidic residues predominate over residues 85 to 96 (SAQEHDKGDRPP). Residues 100–120 (APATQGEQTPTEQIDSQSQQV) show a composition bias toward polar residues. Residues 172-182 (GDQQASGGQQA) are compositionally biased toward low complexity. The span at 183-192 (RGDEDGEARQ) shows a compositional bias: basic and acidic residues. Residues 193–206 (GRRGRRFRDRRRRG) are compositionally biased toward basic residues. Residues 223–301 (VQPVAGILDV…VRLDSINGGS (79 aa)) form the Rho RNA-BD domain. Residues 344–349 (GKGQRA), 356–361 (KAGKTT), and R387 contribute to the ATP site.

The protein belongs to the Rho family. Homohexamer. The homohexamer assembles into an open ring structure.

Functionally, facilitates transcription termination by a mechanism that involves Rho binding to the nascent RNA, activation of Rho's RNA-dependent ATPase activity, and release of the mRNA from the DNA template. The polypeptide is Transcription termination factor Rho (Mycobacterium bovis (strain ATCC BAA-935 / AF2122/97)).